Consider the following 145-residue polypeptide: D-aminoacyl-tRNA deacylase (145 aa).

A Gly-cisPro motif, important for rejection of L-amino acids motif is present at residues 137 to 138; sequence GP.

The protein belongs to the DTD family. In terms of assembly, homodimer.

The protein resides in the cytoplasm. It carries out the reaction glycyl-tRNA(Ala) + H2O = tRNA(Ala) + glycine + H(+). The catalysed reaction is a D-aminoacyl-tRNA + H2O = a tRNA + a D-alpha-amino acid + H(+). An aminoacyl-tRNA editing enzyme that deacylates mischarged D-aminoacyl-tRNAs. Also deacylates mischarged glycyl-tRNA(Ala), protecting cells against glycine mischarging by AlaRS. Acts via tRNA-based rather than protein-based catalysis; rejects L-amino acids rather than detecting D-amino acids in the active site. By recycling D-aminoacyl-tRNA to D-amino acids and free tRNA molecules, this enzyme counteracts the toxicity associated with the formation of D-aminoacyl-tRNA entities in vivo and helps enforce protein L-homochirality. In Pseudomonas entomophila (strain L48), this protein is D-aminoacyl-tRNA deacylase.